The sequence spans 61 residues: ATP synthase subunit J, mitochondrial (61 aa).

Residues 13–32 traverse the membrane as a helical segment; that stretch reads LVKYYWPFFVGFGLTFYGVA.

F-type ATP synthases have 2 components, the catalytic core F(1) and the membrane-embedded component F(0), linked together by a central stalk and a peripheral stalk. The central stalk, also called rotor shaft, is often seen as part of F(1). The peripheral stalk is seen as part of F(0). F(0) contains the membrane channel next to the rotor. F-type ATP synthases form dimers but each monomer functions independently in ATP generation. The dimer consists of 18 different polypeptides: ATP1 (subunit alpha, part of F(1), 3 molecules per monomer), ATP2 (subunit beta, part of F(1), 3 molecules per monomer), ATP3 (subunit gamma, part of the central stalk), ATP4 (subunit b, part of the peripheral stalk), ATP5/OSCP (subunit 5/OSCP, part of the peripheral stalk), ATP6 (subunit a, part of the peripheral stalk), ATP7 (subunit d, part of the peripheral stalk), ATP8 (subunit 8, part of the peripheral stalk), OLI1 (subunit c, part of the rotor, 10 molecules per monomer), ATP14 (subunit h, part of the peripheral stalk), ATP15 (subunit epsilon, part of the central stalk), ATP16 (subunit delta, part of the central stalk), ATP17 (subunit f, part of the peripheral stalk), ATP18 (subunit i/j, part of the peripheral stalk). Dimer-specific subunits are ATP19 (subunit k, at interface between monomers), ATP20 (subunit g, at interface between monomers), TIM11 (subunit e, at interface between monomers). Also contains subunit L.

Its subcellular location is the mitochondrion inner membrane. Functionally, mitochondrial membrane ATP synthase (F(1)F(0) ATP synthase or Complex V) produces ATP from ADP in the presence of a proton gradient across the membrane which is generated by electron transport complexes of the respiratory chain. F-type ATP synthases consist of two structural domains, F(1) - containing the extramembraneous catalytic core, and F(0) - containing the membrane proton channel, linked together by a central stalk and a peripheral stalk. During catalysis, ATP synthesis in the catalytic domain of F(1) is coupled via a rotary mechanism of the central stalk subunits to proton translocation. Part of the complex F(0) domain. Minor subunit located with subunit a/ATP6 in the membrane. The sequence is that of ATP synthase subunit J, mitochondrial from Pichia angusta (Yeast).